The following is a 2464-amino-acid chain: Nonribosomal peptide synthetase NPS2 (2464 aa).

The segment at 275–670 (DDHHPGTSQP…GRIDTQIKLR (396 aa)) is adenylation 1. In terms of domain architecture, Carrier 1 spans 814–888 (TKAEGQLLEI…QIAKALDASS (75 aa)). Serine 848 is subject to O-(pantetheine 4'-phosphoryl)serine. The condensation 1 stretch occupies residues 924–1325 (IYPPFPLQEG…EGLALDLAQG (402 aa)). A Carrier 2 domain is found at 1364 to 1437 (EDLLLRLRKI…RMAASAGKKI (74 aa)). At serine 1398 the chain carries O-(pantetheine 4'-phosphoryl)serine. The interval 1479–1887 (DVFPVTTLQA…LRVLVDDLDA (409 aa)) is condensation 2. The 77-residue stretch at 1917 to 1993 (SSWDEKSSTL…DLVMRAGAED (77 aa)) folds into the Carrier 3 domain. The residue at position 1954 (serine 1954) is an O-(pantetheine 4'-phosphoryl)serine. The segment at 2047–2340 (GGSRYQHVFG…ATQIQDDLRE (294 aa)) is condensation 3.

Belongs to the NRP synthetase family.

It participates in siderophore biosynthesis. In terms of biological role, nonribosomal peptide synthetase; part of the siderophore basidioferrin biosynthetic pathway. The biosynthesis of basidioferrin depends on the hydroxylation of ornithine to N(5)-hydroxyornithine, catalyzed by the monooxygenase SMO1. The second step, the acylation of N(5)-hydroxy-L-ornithine is catalyzed by a not yet identified N-acyltransferase. Finally, assembly of basidioferrin is catalyzed by the nonribosomal peptide synthase (NRPS) NPS2 via amide bond formation between three L-AHO molecules to release the linear L-AHO trimer. N-5-acetyl-N-5-hydroxy-L-ornithine (L-AHO) and N-5-cis-anhydromevalonyl-N-5-hydroxy-L-ornithine (L-AMHO) are accepted as the substrates by the NPS2 adenylation (A) domain, but only L-AHO is trimerized. This chain is Nonribosomal peptide synthetase NPS2, found in Ceriporiopsis subvermispora (strain B) (White-rot fungus).